Here is a 394-residue protein sequence, read N- to C-terminus: Shematrin-like protein 2 (394 aa).

Residues 1–19 (MKPFISLASLIVLIASASA) form the signal peptide.

In terms of tissue distribution, prismatic layer of shell (at protein level). Expressed primarily in the mantle with highest level in the mantle edge and lower level in the mantle pallium.

Its subcellular location is the secreted. This is Shematrin-like protein 2 from Pinctada maxima (Silver-lipped pearl oyster).